Consider the following 247-residue polypeptide: Probable transcriptional regulatory protein Hhal_2210 (247 aa).

This sequence belongs to the TACO1 family.

It is found in the cytoplasm. This Halorhodospira halophila (strain DSM 244 / SL1) (Ectothiorhodospira halophila (strain DSM 244 / SL1)) protein is Probable transcriptional regulatory protein Hhal_2210.